The primary structure comprises 449 residues: UDP-N-acetylmuramoylalanine--D-glutamate ligase (449 aa).

113-119 (GTNGKTT) is a binding site for ATP.

Belongs to the MurCDEF family.

The protein resides in the cytoplasm. The catalysed reaction is UDP-N-acetyl-alpha-D-muramoyl-L-alanine + D-glutamate + ATP = UDP-N-acetyl-alpha-D-muramoyl-L-alanyl-D-glutamate + ADP + phosphate + H(+). The protein operates within cell wall biogenesis; peptidoglycan biosynthesis. Its function is as follows. Cell wall formation. Catalyzes the addition of glutamate to the nucleotide precursor UDP-N-acetylmuramoyl-L-alanine (UMA). This chain is UDP-N-acetylmuramoylalanine--D-glutamate ligase, found in Gloeothece citriformis (strain PCC 7424) (Cyanothece sp. (strain PCC 7424)).